Reading from the N-terminus, the 142-residue chain is Type IV pilus subunit protein TapA (142 aa).

A propeptide spans 1–6 (MKKQSG) (leader sequence). Phe7 is modified (N-methylphenylalanine). Residues 7–27 (FTLIELMIVVAIVAILAAIAL) traverse the membrane as a helical segment.

This sequence belongs to the N-Me-Phe pilin family.

The protein localises to the membrane. Functionally, major component of the type IV (TAP) pilus. Aeromonas hydrophila possesses two distinct families of type IV pili: the bundle-forming pilus (Bfp) and the type IV pilus (Tap). The chain is Type IV pilus subunit protein TapA (tapA) from Aeromonas hydrophila.